Consider the following 337-residue polypeptide: Glyceraldehyde-3-phosphate dehydrogenase (337 aa).

NAD(+)-binding positions include 12–13, Asp-34, and Lys-79; that span reads RI. Residues 150-152, Thr-181, 210-211, and Arg-233 each bind D-glyceraldehyde 3-phosphate; these read SCT and TG. Residue Cys-151 is the Nucleophile of the active site. Position 315 (Asn-315) interacts with NAD(+).

The protein belongs to the glyceraldehyde-3-phosphate dehydrogenase family. In terms of assembly, homotetramer.

It is found in the cytoplasm. It carries out the reaction D-glyceraldehyde 3-phosphate + phosphate + NAD(+) = (2R)-3-phospho-glyceroyl phosphate + NADH + H(+). Its pathway is carbohydrate degradation; glycolysis; pyruvate from D-glyceraldehyde 3-phosphate: step 1/5. This chain is Glyceraldehyde-3-phosphate dehydrogenase (GPD), found in Schizophyllum commune (Split gill fungus).